Reading from the N-terminus, the 347-residue chain is Dihydroorotase (347 aa).

Zn(2+) is bound by residues His-14 and His-16. Substrate is bound by residues 16 to 18 and Asn-42; that span reads HLR. Residues Lys-100, His-137, and His-175 each contribute to the Zn(2+) site. Lys-100 is subject to N6-carboxylysine. His-137 contacts substrate. Leu-220 serves as a coordination point for substrate. Asp-248 is a Zn(2+) binding site. Asp-248 is an active-site residue. 2 residues coordinate substrate: His-252 and Ala-264.

The protein belongs to the metallo-dependent hydrolases superfamily. DHOase family. Class II DHOase subfamily. Homodimer. The cofactor is Zn(2+).

It carries out the reaction (S)-dihydroorotate + H2O = N-carbamoyl-L-aspartate + H(+). The protein operates within pyrimidine metabolism; UMP biosynthesis via de novo pathway; (S)-dihydroorotate from bicarbonate: step 3/3. Catalyzes the reversible cyclization of carbamoyl aspartate to dihydroorotate. The chain is Dihydroorotase from Pseudomonas syringae pv. syringae (strain B728a).